The primary structure comprises 598 residues: MDDYSLDEFRRRWQEELAQAQAPKKRRRPEAAERRARRPEVGSGRGEQASGDPALAQRLLEGAGRPPAARATRAEGQDVASRSRSPLAREGAGGGEQLVDQLIRDLNEMNDVPFFDIQLPYELAINIFQYLDRKELGRCAQVSKTWKVIAEDEVLWYRLCQQEGHLPDSSISDYSCWKLIFQECRAKEHMLRTNWKNRKGAVSELEHVPDTVLCDVHSHDGVVIAGYTSGDVRVWDTRTWDYVAPFLESEDEEDEPGMQPNVSFVRINSSLAVAAYEDGFLNIWDLRTGKYPVHRFEHDARIQALALSQDDATVATASAFDVVMLSPNEEGYWQIAAEFEVPKLVQYLEIVPETRRYPVAVAAAGDLMYLLKAEDSARTLLYAHGPPVTCLDVSANQVAFGVQGLGWVYEGSKILVYSLEAGRRLLKLGNVLRDFTCVNLSDSPPNLMVSGNMDGRVRIHDLRSGNIALSLSAHQLRVSAVQMDDWKIVSGGEEGLVSVWDYRMNQKLWEVYSGHPVQHISFSSHSLITANVPYQTVMRNADLDSFTTHRRHRGLIRAYEFAVDQLAFQSPLPVCRSSCDAMATHYYDLALAFPYNHV.

Met-1 bears the N-acetylmethionine mark. A disordered region spans residues 17–93; it reads LAQAQAPKKR…RSPLAREGAG (77 aa). Residues 29–40 show a composition bias toward basic and acidic residues; the sequence is PEAAERRARRPE. Over residues 61-71 the composition is skewed to low complexity; it reads EGAGRPPAARA. Phosphoserine is present on residues Ser-83 and Ser-85. One can recognise an F-box domain in the interval 113–159; sequence PFFDIQLPYELAINIFQYLDRKELGRCAQVSKTWKVIAEDEVLWYRL. WD repeat units follow at residues 201 to 250, 259 to 299, 300 to 340, 341 to 383, 384 to 429, 430 to 475, 476 to 513, and 514 to 561; these read AVSE…LESE, QPNV…FEHD, ARIQ…AEFE, VPKL…LLYA, HGPP…LKLG, NVLR…SAHQ, LRVS…EVYS, and GHPV…AYEF.

In terms of assembly, component of the Cul7-RING(FBXW8) complex consisting of CUL7, RBX1, SKP1 and FBXW8; within the complex interacts with CUL7 and SKP1. Interacts with GLMN isoform 1. Interacts with OBSL1, CUL1, CUL2, CCT6B, PFDN5, CCT2, CCT3, CCT6A, CCT7, VBP1, CCDC8, ARF1, TRIP13, PDCD5 and GORASP1. Interacts with MAP4K1/HPK1 (when autophosphorylated). Associated component of the 3M complex. Interacts with POUF51 (when phosphorylated on 'Ser-355'). Phosphorylation at Ser-85 by mTORC2 promotes FBXW8 stabilization, allowing its translocation to the cytosol in response to insulin.

The protein localises to the cytoplasm. It is found in the perinuclear region. The protein resides in the golgi apparatus. The protein operates within protein modification; protein ubiquitination. Functionally, substrate-recognition component of the Cul7-RING(FBXW8) ubiquitin ligase complex, which mediates the ubiquitination and subsequent proteasomal degradation of target proteins. The Cul7-RING(FBXW8) complex mediates ubiquitination and consequent degradation of GORASP1, acting as a component of the ubiquitin ligase pathway that regulates Golgi morphogenesis and dendrite patterning in brain. Mediates ubiquitination and degradation of IRS1 in a mTOR-dependent manner: the Cul7-RING(FBXW8) complex recognizes and binds IRS1 previously phosphorylated by S6 kinase (RPS6KB1 or RPS6KB2). The Cul7-RING(FBXW8) complex also mediates ubiquitination of MAP4K1/HPK1: recognizes and binds autophosphorylated MAP4K1/HPK1, leading to its degradation, thereby affecting cell proliferation and differentiation. The Cul7-RING(FBXW8) complex also mediates ubiquitination of phosphorylated cyclin-D1 (CCND1). The Cul7-RING(FBXW8) complex is however not a major regulator of CCND1 stability during the G1/S transition. Associated component of the 3M complex, suggesting that it mediates some of 3M complex functions. This Homo sapiens (Human) protein is F-box/WD repeat-containing protein 8.